A 207-amino-acid chain; its full sequence is Abscisic acid receptor PYL9 (207 aa).

The START-like stretch occupies residues 31-197 (FPPSTTTATT…NLQMLAAVAE (167 aa)). Abscisate-binding positions include Lys74, 104 to 109 (ASTSTE), 131 to 137 (RLRNYRS), and Glu162. The Gate loop motif lies at 100 to 104 (SGLPA). The Latch loop signature appears at 130–132 (HRL).

It belongs to the PYR/PYL/RCAR abscisic acid intracellular receptor family. In terms of assembly, homodimer. Interacts with PP2C06. Interacts with PP2C50. Binding to PP2C50 is dependent on the presence of abscisic acid (ABA). Interacts with PP2C30 and PP2C53. Binding to PP2C30 and PP2C53 is dependent on the presence of ABA.

The protein resides in the cytoplasm. It localises to the cytosol. Its subcellular location is the nucleus. Its function is as follows. Involved in abscisic acid (ABA) signaling during seed germination and abiotic stress response. Acts as a positive regulator of ABA-mediated inhibition of seed germination, and tolerance to drought and cold stresses. Inhibits the activity of the protein phosphatases PP2C06 and PP2C09 when activated by abscisic acid (ABA). The chain is Abscisic acid receptor PYL9 from Oryza sativa subsp. japonica (Rice).